A 502-amino-acid chain; its full sequence is Interleukin-17 receptor B (502 aa).

The N-terminal stretch at 1 to 17 (MSLVLLSLAALCRSAVP) is a signal peptide. Residues 18–292 (REPTVQCGSE…NKSKPGGWLP (275 aa)) are Extracellular-facing. Asn-67, Asn-103, Asn-156, Asn-183, Asn-197, and Asn-283 each carry an N-linked (GlcNAc...) asparagine glycan. Residues 293–313 (LLLLSLLVATWVLVAGIYLMW) traverse the membrane as a helical segment. The Cytoplasmic portion of the chain corresponds to 314–502 (RHERIKKTSF…QACHDGCCSL (189 aa)). In terms of domain architecture, SEFIR spans 331–477 (PIKVLVVYPS…LMKDATAFCA (147 aa)).

In terms of assembly, interacts with DAZAP2. Interacts with TRAF3IP2. As to expression, expressed in several endocrine tissues, mostly in fetal and adult liver, kidney, pancreas, testis, colon, brain and small intestine; not detected in peripheral blood leukocytes, lymphoid organs, and most cell lines.

It is found in the cell membrane. Its subcellular location is the secreted. Its function is as follows. Receptor for the pro-inflammatory cytokines IL17B and IL17E. May play a role in controlling the growth and/or differentiation of hematopoietic cells. The chain is Interleukin-17 receptor B (IL17RB) from Homo sapiens (Human).